Reading from the N-terminus, the 465-residue chain is ATP synthase subunit beta (465 aa).

An ATP-binding site is contributed by Gly-153–Thr-160.

Belongs to the ATPase alpha/beta chains family. As to quaternary structure, F-type ATPases have 2 components, CF(1) - the catalytic core - and CF(0) - the membrane proton channel. CF(1) has five subunits: alpha(3), beta(3), gamma(1), delta(1), epsilon(1). CF(0) has three main subunits: a(1), b(2) and c(9-12). The alpha and beta chains form an alternating ring which encloses part of the gamma chain. CF(1) is attached to CF(0) by a central stalk formed by the gamma and epsilon chains, while a peripheral stalk is formed by the delta and b chains.

It is found in the cell membrane. It catalyses the reaction ATP + H2O + 4 H(+)(in) = ADP + phosphate + 5 H(+)(out). Its function is as follows. Produces ATP from ADP in the presence of a proton gradient across the membrane. The catalytic sites are hosted primarily by the beta subunits. In Clostridium perfringens (strain SM101 / Type A), this protein is ATP synthase subunit beta.